The chain runs to 163 residues: Cyclic pyranopterin monophosphate synthase (163 aa).

Substrate-binding positions include methionine 75–histidine 77 and methionine 113–glutamate 114. The active site involves aspartate 128.

Belongs to the MoaC family. Homohexamer; trimer of dimers.

The enzyme catalyses (8S)-3',8-cyclo-7,8-dihydroguanosine 5'-triphosphate = cyclic pyranopterin phosphate + diphosphate. The protein operates within cofactor biosynthesis; molybdopterin biosynthesis. Its function is as follows. Catalyzes the conversion of (8S)-3',8-cyclo-7,8-dihydroguanosine 5'-triphosphate to cyclic pyranopterin monophosphate (cPMP). The protein is Cyclic pyranopterin monophosphate synthase of Desulforapulum autotrophicum (strain ATCC 43914 / DSM 3382 / VKM B-1955 / HRM2) (Desulfobacterium autotrophicum).